The chain runs to 97 residues: Protein RnfH (97 aa).

It belongs to the UPF0125 (RnfH) family.

In Paramagnetospirillum magneticum (strain ATCC 700264 / AMB-1) (Magnetospirillum magneticum), this protein is Protein RnfH.